The chain runs to 258 residues: Chaperone protein caf1M (258 aa).

The first 20 residues, 1–20 (MILNRLSTLGIITFGMLSFA), serve as a signal peptide directing secretion. C121 and C160 form a disulfide bridge.

It belongs to the periplasmic pilus chaperone family.

It localises to the periplasm. In terms of biological role, has a stimulatory role for the envelope antigen F1 secretion. It seems to interact with the subunit polypeptide and to prevent it from digestion by a protease. This is Chaperone protein caf1M (caf1M) from Yersinia pestis.